The following is a 181-amino-acid chain: Acireductone dioxygenase (181 aa).

Residues His98, His100, Glu104, and His142 each coordinate Fe(2+). Residues His98, His100, Glu104, and His142 each contribute to the Ni(2+) site.

Belongs to the acireductone dioxygenase (ARD) family. As to quaternary structure, monomer. The cofactor is Fe(2+). It depends on Ni(2+) as a cofactor.

It carries out the reaction 1,2-dihydroxy-5-(methylsulfanyl)pent-1-en-3-one + O2 = 3-(methylsulfanyl)propanoate + CO + formate + 2 H(+). The catalysed reaction is 1,2-dihydroxy-5-(methylsulfanyl)pent-1-en-3-one + O2 = 4-methylsulfanyl-2-oxobutanoate + formate + 2 H(+). It participates in amino-acid biosynthesis; L-methionine biosynthesis via salvage pathway; L-methionine from S-methyl-5-thio-alpha-D-ribose 1-phosphate: step 5/6. Functionally, catalyzes 2 different reactions between oxygen and the acireductone 1,2-dihydroxy-3-keto-5-methylthiopentene (DHK-MTPene) depending upon the metal bound in the active site. Fe-containing acireductone dioxygenase (Fe-ARD) produces formate and 2-keto-4-methylthiobutyrate (KMTB), the alpha-ketoacid precursor of methionine in the methionine recycle pathway. Ni-containing acireductone dioxygenase (Ni-ARD) produces methylthiopropionate, carbon monoxide and formate, and does not lie on the methionine recycle pathway. The chain is Acireductone dioxygenase from Alcanivorax borkumensis (strain ATCC 700651 / DSM 11573 / NCIMB 13689 / SK2).